A 440-amino-acid chain; its full sequence is Ribulose bisphosphate carboxylase large chain (440 aa).

Lys-4 is subject to N6,N6,N6-trimethyllysine. Residues Asn-113 and Thr-163 each coordinate substrate. Residue Lys-165 is the Proton acceptor of the active site. Residue Lys-167 participates in substrate binding. 3 residues coordinate Mg(2+): Lys-191, Asp-193, and Glu-194. Lys-191 bears the N6-carboxylysine mark. Residue His-284 is the Proton acceptor of the active site. Substrate-binding residues include Arg-285, His-317, and Ser-369.

The protein belongs to the RuBisCO large chain family. Type I subfamily. As to quaternary structure, heterohexadecamer of 8 large chains and 8 small chains; disulfide-linked. The disulfide link is formed within the large subunit homodimers. Mg(2+) is required as a cofactor. Post-translationally, the disulfide bond which can form in the large chain dimeric partners within the hexadecamer appears to be associated with oxidative stress and protein turnover.

The protein localises to the plastid. It is found in the chloroplast. The catalysed reaction is 2 (2R)-3-phosphoglycerate + 2 H(+) = D-ribulose 1,5-bisphosphate + CO2 + H2O. It carries out the reaction D-ribulose 1,5-bisphosphate + O2 = 2-phosphoglycolate + (2R)-3-phosphoglycerate + 2 H(+). Functionally, ruBisCO catalyzes two reactions: the carboxylation of D-ribulose 1,5-bisphosphate, the primary event in carbon dioxide fixation, as well as the oxidative fragmentation of the pentose substrate in the photorespiration process. Both reactions occur simultaneously and in competition at the same active site. The protein is Ribulose bisphosphate carboxylase large chain of Dicksonia antarctica (Australian tree fern).